A 298-amino-acid polypeptide reads, in one-letter code: MQLEKMITEGSNAASAEIDRVSTLEMCRIINDEDKTVPLAVERVLPDIAAAIDVIHAQVSGGGRLIYIGAGTSGRLGILDASECPPTYGVKPGLVVGLIAGGEYAIQHAVEGAEDSREGGVNDLKNIGLTAQDVVVGIAASGRTPYVIAGLEYARQLGCRTVGISCNPGSAVSTTAEFAITPVVGAEVVTGSSRMKAGTAQKLVLNMLSTGLMIKSGKVFGNLMVDVVATNEKLHVRQVNIVKNATGCNAEKAEAALIACERNCKTAIVMVLKNLDAAEAKKRLDQHGGFIRQVLDKE.

The SIS domain maps to 55–218 (IHAQVSGGGR…STGLMIKSGK (164 aa)). Glu-83 acts as the Proton donor in catalysis. The active site involves Glu-114.

This sequence belongs to the GCKR-like family. MurNAc-6-P etherase subfamily. Homodimer.

The catalysed reaction is N-acetyl-D-muramate 6-phosphate + H2O = N-acetyl-D-glucosamine 6-phosphate + (R)-lactate. It participates in amino-sugar metabolism; 1,6-anhydro-N-acetylmuramate degradation. It functions in the pathway amino-sugar metabolism; N-acetylmuramate degradation. The protein operates within cell wall biogenesis; peptidoglycan recycling. Its function is as follows. Specifically catalyzes the cleavage of the D-lactyl ether substituent of MurNAc 6-phosphate, producing GlcNAc 6-phosphate and D-lactate. Together with AnmK, is also required for the utilization of anhydro-N-acetylmuramic acid (anhMurNAc) either imported from the medium or derived from its own cell wall murein, and thus plays a role in cell wall recycling. This chain is N-acetylmuramic acid 6-phosphate etherase, found in Escherichia fergusonii (strain ATCC 35469 / DSM 13698 / CCUG 18766 / IAM 14443 / JCM 21226 / LMG 7866 / NBRC 102419 / NCTC 12128 / CDC 0568-73).